Consider the following 515-residue polypeptide: Proline--tRNA ligase (515 aa).

It belongs to the class-II aminoacyl-tRNA synthetase family. ProS type 3 subfamily. Homodimer.

It is found in the cytoplasm. The catalysed reaction is tRNA(Pro) + L-proline + ATP = L-prolyl-tRNA(Pro) + AMP + diphosphate. Catalyzes the attachment of proline to tRNA(Pro) in a two-step reaction: proline is first activated by ATP to form Pro-AMP and then transferred to the acceptor end of tRNA(Pro). The chain is Proline--tRNA ligase from Novosphingobium aromaticivorans (strain ATCC 700278 / DSM 12444 / CCUG 56034 / CIP 105152 / NBRC 16084 / F199).